A 188-amino-acid chain; its full sequence is GTP cyclohydrolase 1 (188 aa).

Residues Cys76, His79, and Cys148 each contribute to the Zn(2+) site.

Belongs to the GTP cyclohydrolase I family. In terms of assembly, toroid-shaped homodecamer, composed of two pentamers of five dimers.

It carries out the reaction GTP + H2O = 7,8-dihydroneopterin 3'-triphosphate + formate + H(+). It functions in the pathway cofactor biosynthesis; 7,8-dihydroneopterin triphosphate biosynthesis; 7,8-dihydroneopterin triphosphate from GTP: step 1/1. The sequence is that of GTP cyclohydrolase 1 from Caldanaerobacter subterraneus subsp. tengcongensis (strain DSM 15242 / JCM 11007 / NBRC 100824 / MB4) (Thermoanaerobacter tengcongensis).